A 188-amino-acid polypeptide reads, in one-letter code: Translation machinery-associated protein 22 (188 aa).

Positions 96 to 167 (VVIKRIERSK…GVEELITQML (72 aa)) constitute an SUI1 domain.

Belongs to the DENR family. Interacts with the 40S ribosomal subunit.

The protein localises to the cytoplasm. This Yarrowia lipolytica (strain CLIB 122 / E 150) (Yeast) protein is Translation machinery-associated protein 22 (TMA22).